The primary structure comprises 359 residues: Caffeic acid 3-O-methyltransferase (359 aa).

Residue 126–132 participates in substrate binding; that stretch reads MNQDKVL. A substrate binding region spans residues 158 to 176; it reads TFEYHGTDPRFNKVFNCGM. 5 residues coordinate S-adenosyl-L-methionine: Gly-204, Asp-227, Asp-247, Met-248, and Lys-261. His-265 serves as the catalytic Proton acceptor.

Belongs to the class I-like SAM-binding methyltransferase superfamily. Cation-independent O-methyltransferase family. COMT subfamily. As to quaternary structure, homodimer.

The enzyme catalyses (E)-caffeate + S-adenosyl-L-methionine = (E)-ferulate + S-adenosyl-L-homocysteine + H(+). The protein operates within aromatic compound metabolism; phenylpropanoid biosynthesis. Its function is as follows. Catalyzes the conversion of caffeic acid to ferulic acid and of 5-hydroxyferulic acid to sinapic acid. The resulting products may subsequently be converted to the corresponding alcohols that are incorporated into lignins. This Capsicum chinense (Scotch bonnet) protein is Caffeic acid 3-O-methyltransferase (COMT).